The sequence spans 242 residues: Ethanolamine ammonia-lyase small subunit (242 aa).

Adenosylcob(III)alamin is bound by residues V155 and E176.

It belongs to the EutC family. As to quaternary structure, the basic unit is a heterodimer which dimerizes to form tetramers. The heterotetramers trimerize; 6 large subunits form a core ring with 6 small subunits projecting outwards. Requires adenosylcob(III)alamin as cofactor.

The protein resides in the bacterial microcompartment. It catalyses the reaction ethanolamine = acetaldehyde + NH4(+). It functions in the pathway amine and polyamine degradation; ethanolamine degradation. In terms of biological role, catalyzes the deamination of various vicinal amino-alcohols to oxo compounds. Allows this organism to utilize ethanolamine as the sole source of nitrogen and carbon in the presence of external vitamin B12. In Clostridium acetobutylicum (strain ATCC 824 / DSM 792 / JCM 1419 / IAM 19013 / LMG 5710 / NBRC 13948 / NRRL B-527 / VKM B-1787 / 2291 / W), this protein is Ethanolamine ammonia-lyase small subunit.